The sequence spans 330 residues: Polygalacturonase inhibitor (330 aa).

The N-terminal stretch at 1–24 (MELKFSTFLSLTLLFSSVLNPALS) is a signal peptide. 2 cysteine pairs are disulfide-bonded: C27–C57 and C58–C65. 7 LRR repeats span residues 69–92 (TNRI…LVGD), 93–118 (LPYL…IAKL), 119–141 (KGLK…FLSQ), 142–166 (LKNL…LSEL), 167–192 (PNLG…QFIG), 194–215 (VPDL…FAQM), and 217–237 (FTSI…IFGL). 4 N-linked (GlcNAc...) asparagine glycosylation sites follow: N106, N130, N144, and N154. N238 and N254 each carry an N-linked (GlcNAc...) asparagine glycan. 3 LRR repeats span residues 239-261 (KTTQ…VEFP), 262-285 (TSLT…FTQL), and 287-309 (FQFL…KLQS). N291 carries an N-linked (GlcNAc...) asparagine glycan. 2 disulfide bridges follow: C298-C320 and C322-C329.

Belongs to the polygalacturonase-inhibiting protein family. In terms of assembly, homodimer. Post-translationally, N-linked glycosylated. As to expression, mostly expressed in fruits, and, to a lower extent, in flowers and leaves.

Its subcellular location is the secreted. It localises to the extracellular space. It is found in the apoplast. The protein localises to the cell wall. Inhibitor of fungal polygalacturonase. It is an important factor for plant resistance to phytopathogenic fungi. This is Polygalacturonase inhibitor (PGIP) from Pyrus communis (Pear).